Consider the following 462-residue polypeptide: Dipeptidyl peptidase 1 (462 aa).

Positions 1-24 are cleaved as a signal peptide; sequence MGPWTHSLRAVLLLVLLGVCTVRS. N-linked (GlcNAc...) asparagine glycosylation is found at Asn-29 and Asn-53. Intrachain disulfides connect Cys-30–Cys-118, Cys-54–Cys-136, Cys-254–Cys-297, Cys-290–Cys-330, and Cys-320–Cys-336. Positions 135–230 are excised as a propeptide; it reads ACFVGKKVES…DEIQQQILNL (96 aa). The active site involves Cys-257. A glycan (N-linked (GlcNAc...) asparagine) is linked at Asn-275. Phe-301 and Tyr-303 together coordinate chloride. Tyr-346 serves as a coordination point for chloride. Catalysis depends on residues His-404 and Asn-426.

The protein belongs to the peptidase C1 family. In terms of assembly, tetramer of heterotrimers consisting of exclusion domain, heavy- and light chains. It depends on chloride as a cofactor. Broadly distributed, but higher levels found in lung, liver, kidney and spleen. Lower levels found in testis and brain.

The protein resides in the lysosome. The catalysed reaction is Release of an N-terminal dipeptide, Xaa-Yaa-|-Zaa-, except when Xaa is Arg or Lys, or Yaa or Zaa is Pro.. Thiol protease. Has dipeptidylpeptidase activity. Active against a broad range of dipeptide substrates composed of both polar and hydrophobic amino acids. Proline cannot occupy the P1 position and arginine cannot occupy the P2 position of the substrate. Can act as both an exopeptidase and endopeptidase. Activates serine proteases such as elastase, cathepsin G and granzymes A and B. This chain is Dipeptidyl peptidase 1 (Ctsc), found in Mus musculus (Mouse).